We begin with the raw amino-acid sequence, 402 residues long: Multidrug resistance protein MdtH (402 aa).

11 consecutive transmembrane segments (helical) span residues 13–33 (YFLLVDNMLVVLGFFVVFPLI), 34–54 (SIRFVDQMGWAALMVGIALGL), 99–116 (PWLLWFSCFLSGLGGTLF), 139–159 (LLMMQDSAGAVIGALLGSWLL), 165–185 (LVCATGAALFILCAAFNAWLL), 214–234 (VLTLTGYYMLAVQVMLMLPIM), 243–263 (AAVKWMYAIEACLSLTLLYPI), 277–297 (LMAGLLVMTLSMMPIGLVSSV), 300–320 (LFVLICTFYIGSIIAEPARET), 340–360 (LGLALGGALGYAGGGWLFDSG), and 368–388 (LPWVMLGVVGFITLIALWWQF).

The protein belongs to the major facilitator superfamily. DHA1 family. MdtH (TC 2.A.1.2.21) subfamily.

The protein resides in the cell inner membrane. This chain is Multidrug resistance protein MdtH, found in Enterobacter sp. (strain 638).